Consider the following 62-residue polypeptide: Large ribosomal subunit protein bL28 (62 aa).

Residues 1–27 (MARECYITGRKARSGNKRSHAMNKSKR) are disordered. Positions 10–27 (RKARSGNKRSHAMNKSKR) are enriched in basic residues.

Belongs to the bacterial ribosomal protein bL28 family.

This chain is Large ribosomal subunit protein bL28, found in Shouchella clausii (strain KSM-K16) (Alkalihalobacillus clausii).